Consider the following 72-residue polypeptide: Large ribosomal subunit protein uL30 (72 aa).

The protein belongs to the universal ribosomal protein uL30 family. In terms of assembly, part of the 50S ribosomal subunit.

This Mycobacterium ulcerans (strain Agy99) protein is Large ribosomal subunit protein uL30.